The sequence spans 90 residues: Large ribosomal subunit protein bL27 (90 aa).

The segment at 1 to 21 (MASKKAGGSTRNGRDSEAKRL) is disordered.

The protein belongs to the bacterial ribosomal protein bL27 family.

In Neisseria gonorrhoeae (strain ATCC 700825 / FA 1090), this protein is Large ribosomal subunit protein bL27.